An 85-amino-acid polypeptide reads, in one-letter code: Large ribosomal subunit protein bL27 (85 aa).

Residues 1 to 10 (MAQKKGGGST) show a composition bias toward gly residues. The disordered stretch occupies residues 1 to 20 (MAQKKGGGSTRNGRDSKPKM).

This sequence belongs to the bacterial ribosomal protein bL27 family.

The chain is Large ribosomal subunit protein bL27 from Delftia acidovorans (strain DSM 14801 / SPH-1).